The chain runs to 24 residues: Grammistin Gs G (24 aa).

This sequence belongs to the grammistin family. Group 1 subfamily. As to quaternary structure, exists as aggregates of 3-4 molecules. Expressed by the skin glands.

Its subcellular location is the secreted. Functionally, thanks to its abundant amphiphilic alpha-helices, it may integrate into membrane phospholipids, leading to lysis of the membrane. Its high hemolytic activity is inhibited by phospholipids, but not by cholesterol. Has antibacterial activity with a broad spectrum against various species of bacteria including both Gram-positive and Gram-negative groups. Also has high ichthyotoxic activity. In Grammistes sexlineatus (Goldenstriped soapfish), this protein is Grammistin Gs G.